The primary structure comprises 453 residues: Bifunctional protein GlmU (453 aa).

The interval 1-228 (MPHWAAVIMA…VHEALGINSR (228 aa)) is pyrophosphorylase. UDP-N-acetyl-alpha-D-glucosamine contacts are provided by residues Lys23, Gln73, 78–79 (GT), 100–102 (SGD), Gly139, Glu153, Asn168, and Asn226. Asp102 provides a ligand contact to Mg(2+). Asn226 contacts Mg(2+). The segment at 229 to 249 (AQLAAAEDVARQRILSYWMEE) is linker. The tract at residues 250-453 (GVTIIDPRST…IENWVRNKKK (204 aa)) is N-acetyltransferase. UDP-N-acetyl-alpha-D-glucosamine is bound by residues Arg331 and Lys349. The active-site Proton acceptor is the His361. Tyr364 and Asn375 together coordinate UDP-N-acetyl-alpha-D-glucosamine. Acetyl-CoA is bound by residues Ala378, 384–385 (NY), Ser403, Ala421, and Arg438.

This sequence in the N-terminal section; belongs to the N-acetylglucosamine-1-phosphate uridyltransferase family. The protein in the C-terminal section; belongs to the transferase hexapeptide repeat family. As to quaternary structure, homotrimer. Mg(2+) serves as cofactor.

It is found in the cytoplasm. It carries out the reaction alpha-D-glucosamine 1-phosphate + acetyl-CoA = N-acetyl-alpha-D-glucosamine 1-phosphate + CoA + H(+). The catalysed reaction is N-acetyl-alpha-D-glucosamine 1-phosphate + UTP + H(+) = UDP-N-acetyl-alpha-D-glucosamine + diphosphate. Its pathway is nucleotide-sugar biosynthesis; UDP-N-acetyl-alpha-D-glucosamine biosynthesis; N-acetyl-alpha-D-glucosamine 1-phosphate from alpha-D-glucosamine 6-phosphate (route II): step 2/2. The protein operates within nucleotide-sugar biosynthesis; UDP-N-acetyl-alpha-D-glucosamine biosynthesis; UDP-N-acetyl-alpha-D-glucosamine from N-acetyl-alpha-D-glucosamine 1-phosphate: step 1/1. It participates in bacterial outer membrane biogenesis; LPS lipid A biosynthesis. Functionally, catalyzes the last two sequential reactions in the de novo biosynthetic pathway for UDP-N-acetylglucosamine (UDP-GlcNAc). The C-terminal domain catalyzes the transfer of acetyl group from acetyl coenzyme A to glucosamine-1-phosphate (GlcN-1-P) to produce N-acetylglucosamine-1-phosphate (GlcNAc-1-P), which is converted into UDP-GlcNAc by the transfer of uridine 5-monophosphate (from uridine 5-triphosphate), a reaction catalyzed by the N-terminal domain. In Desulfitobacterium hafniense (strain DSM 10664 / DCB-2), this protein is Bifunctional protein GlmU.